The following is a 150-amino-acid chain: FAD synthase (150 aa).

ATP is bound by residues 11–12 (TF), 16–19 (HPGH), aspartate 96, and tyrosine 124.

It belongs to the archaeal FAD synthase family. Homodimer. A divalent metal cation is required as a cofactor.

It catalyses the reaction FMN + ATP + H(+) = FAD + diphosphate. Its pathway is cofactor biosynthesis; FAD biosynthesis; FAD from FMN: step 1/1. In terms of biological role, catalyzes the transfer of the AMP portion of ATP to flavin mononucleotide (FMN) to produce flavin adenine dinucleotide (FAD) coenzyme. The protein is FAD synthase of Methanocaldococcus fervens (strain DSM 4213 / JCM 15782 / AG86) (Methanococcus fervens).